The sequence spans 175 residues: RNA pyrophosphohydrolase (175 aa).

The Nudix hydrolase domain occupies 6-149; that stretch reads GYRPNVGIVI…KRDVYRRVMK (144 aa). The Nudix box motif lies at 38 to 59; sequence GGINPGETAEQAMYRELFEEVG.

Belongs to the Nudix hydrolase family. RppH subfamily. A divalent metal cation is required as a cofactor.

Its function is as follows. Accelerates the degradation of transcripts by removing pyrophosphate from the 5'-end of triphosphorylated RNA, leading to a more labile monophosphorylated state that can stimulate subsequent ribonuclease cleavage. This is RNA pyrophosphohydrolase from Erwinia tasmaniensis (strain DSM 17950 / CFBP 7177 / CIP 109463 / NCPPB 4357 / Et1/99).